A 33-amino-acid chain; its full sequence is Photosystem II reaction center protein Psb30 (33 aa).

Residues 5 to 25 (VILQLGSILLVVAAGPLVIVL) form a helical membrane-spanning segment.

This sequence belongs to the Psb30/Ycf12 family. In terms of assembly, PSII is composed of 1 copy each of membrane proteins PsbA, PsbB, PsbC, PsbD, PsbE, PsbF, PsbH, PsbI, PsbJ, PsbK, PsbL, PsbM, PsbT, PsbX, PsbY, PsbZ, Psb30/Ycf12, peripheral proteins of the oxygen-evolving complex and a large number of cofactors. It forms dimeric complexes.

The protein localises to the plastid. It localises to the chloroplast thylakoid membrane. In terms of biological role, a core subunit of photosystem II (PSII), probably helps stabilize the reaction center. The protein is Photosystem II reaction center protein Psb30 of Oltmannsiellopsis viridis (Marine flagellate).